The sequence spans 399 residues: Centrosomal protein 43 (399 aa).

A LisH domain is found at 70–102; the sequence is DGRLVASLVAEFLQFFNLDFTLAVFQPETSTLQ. Disordered regions lie at residues 139 to 218 and 232 to 308; these read EKGP…SSLH and NRTL…SESK. Residue Thr-143 is modified to Phosphothreonine. Residues Ser-152, Ser-156, and Ser-160 each carry the phosphoserine modification. A compositionally biased stretch (polar residues) spans 163–172; sequence GKTSAQTTPS. Position 170 is a phosphothreonine (Thr-170). Over residues 175–186 the composition is skewed to basic residues; sequence PRYKGQGKKKTS. Ser-202 carries the post-translational modification Phosphoserine. A compositionally biased stretch (low complexity) spans 205-218; the sequence is SVSLSEPKSKSSLH. Thr-234 bears the Phosphothreonine mark. Positions 245 to 256 are enriched in acidic residues; it reads PDEDDMEGDSFF. Residues 259–275 are compositionally biased toward basic and acidic residues; sequence PIPKPEKTYGLRKEPRK. The segment covering 286-302 has biased composition (low complexity); it reads APPLKSGLSSLAGAPSL. Residues Ser-301 and Ser-326 each carry the phosphoserine modification. The interval 331–353 is disordered; it reads TGEDDDYVDDFNSTSHRSEKSEI. Position 337 is a phosphotyrosine (Tyr-337).

The protein belongs to the CEP43 family. In terms of assembly, homodimer. Part of a ternary complex that contains CEP350, CEP43 and MAPRE1. Interacts directly with CEP350 and MAPRE1. Interacts with CEP19. Interacts (via N-terminus) with CEP350 (via C-terminus). In terms of tissue distribution, ubiquitous. Highly expressed in heart, liver, muscle, kidney, intestine, colon, adrenal gland, prostate, testis, and pancreas.

It localises to the cytoplasm. The protein localises to the cytoskeleton. It is found in the microtubule organizing center. The protein resides in the centrosome. Its subcellular location is the centriole. It localises to the cilium basal body. In terms of biological role, required for anchoring microtubules to the centrosomes. Required for ciliation. The polypeptide is Centrosomal protein 43 (Homo sapiens (Human)).